The sequence spans 130 residues: Small ribosomal subunit protein uS8A (130 aa).

It belongs to the universal ribosomal protein uS8 family. As to quaternary structure, component of the small ribosomal subunit (SSU). Mature yeast ribosomes consist of a small (40S) and a large (60S) subunit. The 40S small subunit contains 1 molecule of ribosomal RNA (18S rRNA) and at least 33 different proteins. The large 60S subunit contains 3 rRNA molecules (25S, 5.8S and 5S rRNA) and at least 46 different proteins.

It is found in the cytoplasm. The protein localises to the nucleus. Its function is as follows. Component of the ribosome, a large ribonucleoprotein complex responsible for the synthesis of proteins in the cell. The small ribosomal subunit (SSU) binds messenger RNAs (mRNAs) and translates the encoded message by selecting cognate aminoacyl-transfer RNA (tRNA) molecules. The large subunit (LSU) contains the ribosomal catalytic site termed the peptidyl transferase center (PTC), which catalyzes the formation of peptide bonds, thereby polymerizing the amino acids delivered by tRNAs into a polypeptide chain. The nascent polypeptides leave the ribosome through a tunnel in the LSU and interact with protein factors that function in enzymatic processing, targeting, and the membrane insertion of nascent chains at the exit of the ribosomal tunnel. In Schizosaccharomyces pombe (strain 972 / ATCC 24843) (Fission yeast), this protein is Small ribosomal subunit protein uS8A (rps2201).